The sequence spans 203 residues: Fucoxanthin-chlorophyll a-c binding protein, chloroplastic (203 aa).

Residues 1-30 (MKLAIAALLAGSAAAFAPAQSGKASTALNM) constitute a chloroplast transit peptide.

The protein belongs to the fucoxanthin chlorophyll protein family. In terms of assembly, the LHC complex of chromophytic algae is composed of fucoxanthin, chlorophyll A and C bound non-covalently by fucoxanthin chlorophyll proteins (FCPs). The ratio of pigments in this LHC is; fucoxanthin: chlorophyll C: chlorophyll A; (0.6-1): (0.1-0.3): (1).

It is found in the plastid. It localises to the chloroplast thylakoid membrane. The light-harvesting complex (LHC) functions as a light receptor, it captures and delivers excitation energy to photosystems with which it is closely associated. Energy is transferred from the carotenoid and chlorophyll C (or B) to chlorophyll A and the photosynthetic reaction centers where it is used to synthesize ATP and reducing power. The chain is Fucoxanthin-chlorophyll a-c binding protein, chloroplastic (FCPA) from Trieres chinensis (Marine centric diatom).